The primary structure comprises 256 residues: uncharacterized protein (256 aa).

The next 2 membrane-spanning stretches (helical) occupy residues 155-175 (ITGM…GLWL) and 203-223 (ITTT…YLLI).

It localises to the cell membrane. This is an uncharacterized protein from Mycobacterium bovis (strain ATCC BAA-935 / AF2122/97).